We begin with the raw amino-acid sequence, 555 residues long: MRSKKMTGGLEKAPHRSLLYALGLSKDEVNRPLIGICNAANEIIPGHVHLHTITRAVKDGVRLAGGVPMEFPAIGVCDGLAMNHTGMRYSLPSREIIADSIEIMATAHPFDALVLIPNCDKIVPGMLMAALRLNIPTIVISGGPMLAGRKDGKKVDLITVFEGVGQVKTGNMTEDELTVLEQSACPTCGSCSGMFTANSMNCLSETIGLALPGNGTIPAVMAERTRLAKAAGSQIMTLLEKDIKPRDIVTEKSLKNAVTMDMALGCSTNTVLHLPAIFNEAGLKLDLTVFDEISRNTPNLCKLSPAGPDHIEDLNAAGGIQGVMAELSKTGRIELDPMTVTGKTVGENLKELNAGVKDHKIVRPVDDPYSTEGGIAVLFGNIAEDGCVVKQSAVAPEMMKRTCNAKVFNSEEEAVEAILGNQIVKGDAVVILYEGPKGGPGMREMLTPTSAIAGMGLGADVALITDGRFSGGTRGAAIGHVSPEAASGGAIGLVQTGDVIEIDIPGRSINVKLDEAEMEKRRAEFKPIEKEMPSAFLKRYSQNVTSASTGAIYKK.

D78 provides a ligand contact to Mg(2+). C119 serves as a coordination point for [2Fe-2S] cluster. Residues D120 and K121 each coordinate Mg(2+). N6-carboxylysine is present on K121. Position 191 (C191) interacts with [2Fe-2S] cluster. Residue E444 participates in Mg(2+) binding. S470 (proton acceptor) is an active-site residue.

This sequence belongs to the IlvD/Edd family. Homodimer. Requires [2Fe-2S] cluster as cofactor. It depends on Mg(2+) as a cofactor.

The catalysed reaction is (2R)-2,3-dihydroxy-3-methylbutanoate = 3-methyl-2-oxobutanoate + H2O. The enzyme catalyses (2R,3R)-2,3-dihydroxy-3-methylpentanoate = (S)-3-methyl-2-oxopentanoate + H2O. It functions in the pathway amino-acid biosynthesis; L-isoleucine biosynthesis; L-isoleucine from 2-oxobutanoate: step 3/4. It participates in amino-acid biosynthesis; L-valine biosynthesis; L-valine from pyruvate: step 3/4. Functionally, functions in the biosynthesis of branched-chain amino acids. Catalyzes the dehydration of (2R,3R)-2,3-dihydroxy-3-methylpentanoate (2,3-dihydroxy-3-methylvalerate) into 2-oxo-3-methylpentanoate (2-oxo-3-methylvalerate) and of (2R)-2,3-dihydroxy-3-methylbutanoate (2,3-dihydroxyisovalerate) into 2-oxo-3-methylbutanoate (2-oxoisovalerate), the penultimate precursor to L-isoleucine and L-valine, respectively. The polypeptide is Dihydroxy-acid dehydratase (Maridesulfovibrio salexigens (strain ATCC 14822 / DSM 2638 / NCIMB 8403 / VKM B-1763) (Desulfovibrio salexigens)).